Consider the following 376-residue polypeptide: Carbamoyl phosphate synthase small chain (376 aa).

A CPSase region spans residues 1–187; sequence MKALLALEDG…KEDGSFLWKQ (187 aa). 3 residues coordinate L-glutamine: Ser45, Gly239, and Gly241. In terms of domain architecture, Glutamine amidotransferase type-1 spans 189 to 376; that stretch reads KIPLIVYDYG…KEVVLLKLGC (188 aa). Cys266 functions as the Nucleophile in the catalytic mechanism. Leu267, Gln270, Asn308, Gly310, and Phe311 together coordinate L-glutamine. Catalysis depends on residues His349 and Glu351.

Belongs to the CarA family. Composed of two chains; the small (or glutamine) chain promotes the hydrolysis of glutamine to ammonia, which is used by the large (or ammonia) chain to synthesize carbamoyl phosphate. Tetramer of heterodimers (alpha,beta)4.

The catalysed reaction is hydrogencarbonate + L-glutamine + 2 ATP + H2O = carbamoyl phosphate + L-glutamate + 2 ADP + phosphate + 2 H(+). It carries out the reaction L-glutamine + H2O = L-glutamate + NH4(+). The protein operates within amino-acid biosynthesis; L-arginine biosynthesis; carbamoyl phosphate from bicarbonate: step 1/1. Its pathway is pyrimidine metabolism; UMP biosynthesis via de novo pathway; (S)-dihydroorotate from bicarbonate: step 1/3. Small subunit of the glutamine-dependent carbamoyl phosphate synthetase (CPSase). CPSase catalyzes the formation of carbamoyl phosphate from the ammonia moiety of glutamine, carbonate, and phosphate donated by ATP, constituting the first step of 2 biosynthetic pathways, one leading to arginine and/or urea and the other to pyrimidine nucleotides. The small subunit (glutamine amidotransferase) binds and cleaves glutamine to supply the large subunit with the substrate ammonia. The protein is Carbamoyl phosphate synthase small chain of Lawsonia intracellularis (strain PHE/MN1-00).